Reading from the N-terminus, the 122-residue chain is Modulator protein MzrA (122 aa).

At 1 to 10 (MKILTRIPRR) the chain is on the cytoplasmic side. Residues 11-31 (LLPWLLGGALALVAVSFAPAL) form a helical membrane-spanning segment. Residues 32–122 (LSHETVVQIR…NQDANRSIYS (91 aa)) lie on the Periplasmic side of the membrane.

It belongs to the MzrA family. As to quaternary structure, interacts with EnvZ.

It localises to the cell inner membrane. Its function is as follows. Modulates the activity of the EnvZ/OmpR two-component regulatory system, probably by directly modulating EnvZ enzymatic activity and increasing stability of phosphorylated OmpR. This is Modulator protein MzrA from Pantoea sp. (strain At-9b).